The sequence spans 103 residues: Small ribosomal subunit protein uS10 (103 aa).

The protein belongs to the universal ribosomal protein uS10 family. Part of the 30S ribosomal subunit.

In terms of biological role, involved in the binding of tRNA to the ribosomes. The sequence is that of Small ribosomal subunit protein uS10 from Pectobacterium atrosepticum (strain SCRI 1043 / ATCC BAA-672) (Erwinia carotovora subsp. atroseptica).